Consider the following 176-residue polypeptide: Lipocalin-1 (176 aa).

Residues 1–19 form the signal peptide; it reads MMRALLLAIGLGLVAALQA. The cysteines at positions 80 and 171 are disulfide-linked.

This sequence belongs to the calycin superfamily. Lipocalin family. As to quaternary structure, predominantly monomer. May form homodimer. Interacts with LMBR1L; this interaction mediates the endocytosis of LCN1.

The protein localises to the secreted. Could play a role in taste reception. Could be necessary for the concentration and delivery of sapid molecules in the gustatory system. Can bind various ligands, with chemical structures ranging from lipids and retinoids to the macrocyclic antibiotic rifampicin and even to microbial siderophores. Exhibits an extremely wide ligand pocket. In Sus scrofa (Pig), this protein is Lipocalin-1 (LCN1).